We begin with the raw amino-acid sequence, 922 residues long: GPI inositol-deacylase (922 aa).

Residues 1 to 11 lie on the Cytoplasmic side of the membrane; that stretch reads MFLHSVNLWNL. A helical transmembrane segment spans residues 12–32; that stretch reads AFYVFMVFLATLGLWDVFFGF. Topologically, residues 33–597 are lumenal; it reads EENKCSMSYM…GQVVRFHGGA (565 aa). The active site involves S174. N-linked (GlcNAc...) asparagine glycans are attached at residues N363, N402, and N558. The helical transmembrane segment at 598–618 threads the bilayer; the sequence is LPAYVVSSILLAYGGQLYSLL. The Cytoplasmic segment spans residues 619 to 641; it reads STGFCLEYGTMLDKEAKPYKVDP. Residues 642-662 traverse the membrane as a helical segment; sequence FVIMIKFLLGYKWFKELWDAV. Residues 663–668 lie on the Lumenal side of the membrane; that stretch reads LLPELD. A helical membrane pass occupies residues 669 to 689; it reads AIVLTSQSMCFPLVSLILFLF. At 690 to 694 the chain is on the cytoplasmic side; it reads GTCTA. Residues 695 to 715 form a helical membrane-spanning segment; it reads YWSGLLSSASVQLLSSLWLAL. Residues 716 to 733 are Lumenal-facing; the sequence is KRPAELPKDVKVMSPDLP. A helical membrane pass occupies residues 734 to 754; that stretch reads VLTVVFLIISWTTCGALAILL. The Cytoplasmic segment spans residues 755 to 816; sequence SYLYYVFKVV…NDAEDSLRMH (62 aa). The tract at residues 776–801 is disordered; the sequence is NQPVNPKHSRRSEKKSNHHKDSAIQN. Positions 782-793 are enriched in basic residues; the sequence is KHSRRSEKKSNH. Residues 817–837 traverse the membrane as a helical segment; the sequence is STVINLLTWVVLLSMPSLIYW. Topologically, residues 838-853 are lumenal; the sequence is SKNLRYYFKLNPDPCK. Residues 854–874 form a helical membrane-spanning segment; the sequence is PLAFLLIPAIAVLGNTHTVSI. Residues 875–894 are Cytoplasmic-facing; that stretch reads KSSKLLKTASQFPLPLAVGV. Residues 895–915 traverse the membrane as a helical segment; the sequence is IAFGSSHLYRVPCFVIIPLVF. Residues 916-922 lie on the Lumenal side of the membrane; sequence HSLCNFM.

The protein belongs to the GPI inositol-deacylase family.

The protein localises to the endoplasmic reticulum membrane. In terms of biological role, GPI inositol-deacylase that catalyzes the remove of the acyl chain linked to the 2-OH position of inositol ring from the GPI-anchored protein (GPI-AP) in the endoplasmic reticulum. Initiates the post-attachment remodeling phase of GPI-AP biogenesis and participates in endoplasmic reticulum (ER)-to-Golgi transport of GPI-anchored protein. In Rattus norvegicus (Rat), this protein is GPI inositol-deacylase.